We begin with the raw amino-acid sequence, 229 residues long: Bcl-2-like protein 1 (229 aa).

The short motif at 4–24 (SNRELVIDFVSYKLSQRGHCW) is the BH4 element. Positions 82 to 96 (VRQALRDAGDEFELR) match the BH3 motif. The short motif at 125-144 (ELFHDGVNWGRIVAFFSFGG) is the BH1 element. The BH2 motif lies at 176–191 (PWIQENGGWERFVDLY). Residues 206 to 223 (FNKWLLTGATVAGVLLLG) form a helical membrane-spanning segment.

The protein belongs to the Bcl-2 family. In terms of tissue distribution, highest expression in organs with lymphoid development.

It is found in the mitochondrion membrane. The protein resides in the nucleus membrane. The protein localises to the mitochondrion matrix. Its subcellular location is the cytoplasm. It localises to the cytoskeleton. It is found in the microtubule organizing center. The protein resides in the centrosome. The protein localises to the cytosol. Its subcellular location is the cytoplasmic vesicle. It localises to the secretory vesicle. It is found in the synaptic vesicle membrane. Its function is as follows. Dominant regulator of apoptotic cell death. The long form displays cell death repressor activity, whereas the short isoform promotes apoptosis. Also acts as a regulator of G2 checkpoint and progression to cytokinesis during mitosis. The sequence is that of Bcl-2-like protein 1 (BCL2L1) from Gallus gallus (Chicken).